The sequence spans 166 residues: Regulator of ribonuclease activity A (166 aa).

The protein belongs to the RraA family. In terms of assembly, homotrimer. Binds to both RNA-binding sites in the C-terminal region of Rne and to RhlB.

Its subcellular location is the cytoplasm. Functionally, globally modulates RNA abundance by binding to RNase E (Rne) and regulating its endonucleolytic activity. Can modulate Rne action in a substrate-dependent manner by altering the composition of the degradosome. Modulates RNA-binding and helicase activities of the degradosome. This is Regulator of ribonuclease activity A from Glaesserella parasuis serovar 5 (strain SH0165) (Haemophilus parasuis).